Reading from the N-terminus, the 127-residue chain is Large ribosomal subunit protein bL19 (127 aa).

It belongs to the bacterial ribosomal protein bL19 family.

In terms of biological role, this protein is located at the 30S-50S ribosomal subunit interface and may play a role in the structure and function of the aminoacyl-tRNA binding site. This Trichodesmium erythraeum (strain IMS101) protein is Large ribosomal subunit protein bL19.